Reading from the N-terminus, the 206-residue chain is dITP/XTP pyrophosphatase (206 aa).

7–12 (SRNPKK) is a binding site for substrate. Residue D72 is the Proton acceptor of the active site. D72 serves as a coordination point for Mg(2+). Substrate is bound by residues S73, 155–158 (FGYD), K178, and 183–184 (HR).

It belongs to the HAM1 NTPase family. Homodimer. Mg(2+) serves as cofactor.

It catalyses the reaction XTP + H2O = XMP + diphosphate + H(+). The catalysed reaction is dITP + H2O = dIMP + diphosphate + H(+). It carries out the reaction ITP + H2O = IMP + diphosphate + H(+). Pyrophosphatase that catalyzes the hydrolysis of nucleoside triphosphates to their monophosphate derivatives, with a high preference for the non-canonical purine nucleotides XTP (xanthosine triphosphate), dITP (deoxyinosine triphosphate) and ITP. Seems to function as a house-cleaning enzyme that removes non-canonical purine nucleotides from the nucleotide pool, thus preventing their incorporation into DNA/RNA and avoiding chromosomal lesions. This Mycobacteroides abscessus (strain ATCC 19977 / DSM 44196 / CCUG 20993 / CIP 104536 / JCM 13569 / NCTC 13031 / TMC 1543 / L948) (Mycobacterium abscessus) protein is dITP/XTP pyrophosphatase.